Reading from the N-terminus, the 126-residue chain is MHELSYATSVLNAILDAVKQQEELGRKVIKVNDINLEIGDLTLLSVDQLQFVFEVISEDTVCKGAELKAEIVKPKIFCMDCEFEGNLDTKDELEVACPKCESRNVKLKGGKEFNIVNATIEFDDEE.

A Ni(2+)-binding site is contributed by histidine 2. Residues cysteine 78, cysteine 81, cysteine 97, and cysteine 100 each coordinate Zn(2+).

It belongs to the HypA/HybF family.

Functionally, involved in the maturation of [NiFe] hydrogenases. Required for nickel insertion into the metal center of the hydrogenase. In Methanococcus maripaludis (strain C5 / ATCC BAA-1333), this protein is Hydrogenase maturation factor HypA.